The sequence spans 579 residues: 2-succinyl-5-enolpyruvyl-6-hydroxy-3-cyclohexene-1-carboxylate synthase (579 aa).

It belongs to the TPP enzyme family. MenD subfamily. Homodimer. The cofactor is Mg(2+). Mn(2+) serves as cofactor. Thiamine diphosphate is required as a cofactor.

The enzyme catalyses isochorismate + 2-oxoglutarate + H(+) = 5-enolpyruvoyl-6-hydroxy-2-succinyl-cyclohex-3-ene-1-carboxylate + CO2. Its pathway is quinol/quinone metabolism; 1,4-dihydroxy-2-naphthoate biosynthesis; 1,4-dihydroxy-2-naphthoate from chorismate: step 2/7. It functions in the pathway quinol/quinone metabolism; menaquinone biosynthesis. In terms of biological role, catalyzes the thiamine diphosphate-dependent decarboxylation of 2-oxoglutarate and the subsequent addition of the resulting succinic semialdehyde-thiamine pyrophosphate anion to isochorismate to yield 2-succinyl-5-enolpyruvyl-6-hydroxy-3-cyclohexene-1-carboxylate (SEPHCHC). The polypeptide is 2-succinyl-5-enolpyruvyl-6-hydroxy-3-cyclohexene-1-carboxylate synthase (Shewanella frigidimarina (strain NCIMB 400)).